An 805-amino-acid polypeptide reads, in one-letter code: Angiotensin-converting enzyme 2 (805 aa).

The first 17 residues, 1–17 (MSGSFWLLLSFAALTAA), serve as a signal peptide directing secretion. The Extracellular portion of the chain corresponds to 18 to 740 (QSTTEELAKT…LSPPYRPPVT (723 aa)). Residues 19–607 (STTEELAKTF…QNRNSFVGWD (589 aa)) enclose the Peptidase M2 domain. The interval 30 to 41 (ETFNYEAQELSY) is interaction with SARS S protein. N-linked (GlcNAc...) asparagine glycosylation is present at Asn53. 2 interaction with SARS S protein regions span residues 82 to 84 (TYP) and 90 to 93 (DAKI). An intrachain disulfide couples Cys133 to Cys141. Arg169 provides a ligand contact to chloride. N-linked (GlcNAc...) asparagine glycosylation occurs at Asn216. Position 273 (Arg273) interacts with substrate. N-linked (GlcNAc...) asparagine glycosylation occurs at Asn322. A disulfide bridge connects residues Cys344 and Cys361. A substrate-binding site is contributed by 345 to 346 (HP). The segment at 353–357 (KGDFR) is interaction with SARS S protein. His374 is a Zn(2+) binding site. Glu375 functions as the Proton acceptor in the catalytic mechanism. Residues His378 and Glu402 each contribute to the Zn(2+) site. Chloride contacts are provided by Trp477 and Lys481. His505 (proton donor) is an active-site residue. Tyr515 serves as a coordination point for substrate. A disulfide bridge links Cys530 with Cys542. Residue Asn546 is glycosylated (N-linked (GlcNAc...) asparagine). In terms of domain architecture, Collectrin-like spans 614-805 (SDQSIKVRIS…QHADDVQTSF (192 aa)). The interval 652–659 (REYFSKVK) is essential for cleavage by ADAM17. N-linked (GlcNAc...) asparagine glycosylation is found at Asn660 and Asn690. An essential for cleavage by TMPRSS11D and TMPRSS2 region spans residues 697–716 (RSEVEDAIRMSRSRINDAFR). Residues 741–761 (IWLIVFGVVMGAIVVGIVLLI) form a helical membrane-spanning segment. Topologically, residues 762–805 (VSGIRNRRKNDQAGSEENPYASVDLNKGENNPGFQHADDVQTSF) are cytoplasmic. Positions 771-805 (NDQAGSEENPYASVDLNKGENNPGFQHADDVQTSF) are disordered. An LIR motif is present at residues 778 to 786 (ENPYASVDL). Tyr781 carries the phosphotyrosine modification. The Endocytic sorting signal signature appears at 781–784 (YASV). Positions 781–785 (YASVD) match the SH2-binding motif. Ser783 is subject to Phosphoserine. The PTB signature appears at 792–795 (NPGF). The short motif at 803–805 (TSF) is the PDZ-binding element.

The protein belongs to the peptidase M2 family. Homodimer. Interacts with the catalytically active form of TMPRSS2. Interacts with SLC6A19; this interaction is essential for expression and function of SLC6A19 in intestine. Interacts with ITGA5:ITGB1. Probably interacts (via endocytic sorting signal motif) with AP2M1; the interaction is inhibited by phosphorylation of Tyr-781. Interacts (via PDZ-binding motif) with NHERF1 (via PDZ domains); the interaction may enhance ACE2 membrane residence. In terms of assembly, (Microbial infection) Interacts with SARS-CoV S protein. Zn(2+) serves as cofactor. It depends on chloride as a cofactor. Proteolytic cleavage by ADAM17 generates a secreted form. Also cleaved by serine proteases: TMPRSS2, TMPRSS11D and HPN/TMPRSS1. Post-translationally, phosphorylated. Phosphorylation at Tyr-781 probably inhibits interaction with AP2M1 and enables interactions with proteins containing SH2 domains.

It localises to the secreted. It is found in the cell membrane. The protein localises to the cytoplasm. The protein resides in the cell projection. Its subcellular location is the cilium. It localises to the apical cell membrane. The catalysed reaction is angiotensin II + H2O = angiotensin-(1-7) + L-phenylalanine. It carries out the reaction angiotensin I + H2O = angiotensin-(1-9) + L-leucine. Essential counter-regulatory carboxypeptidase of the renin-angiotensin hormone system that is a critical regulator of blood volume, systemic vascular resistance, and thus cardiovascular homeostasis. Converts angiotensin I to angiotensin 1-9, a nine-amino acid peptide with anti-hypertrophic effects in cardiomyocytes, and angiotensin II to angiotensin 1-7, which then acts as a beneficial vasodilator and anti-proliferation agent, counterbalancing the actions of the vasoconstrictor angiotensin II. Also removes the C-terminal residue from three other vasoactive peptides, neurotensin, kinetensin, and des-Arg bradykinin, but is not active on bradykinin. Also cleaves other biological peptides, such as apelins, casomorphins and dynorphin A. Plays an important role in amino acid transport by acting as binding partner of amino acid transporter SLC6A19 in intestine, regulating trafficking, expression on the cell surface, and its catalytic activity. In terms of biological role, (Microbial infection) Acts as a receptor for human coronavirus SARS. The chain is Angiotensin-converting enzyme 2 (ACE2) from Paguma larvata (Masked palm civet).